The primary structure comprises 251 residues: Myozenin-3 (251 aa).

A Phosphoserine modification is found at S31. The segment at 50–67 (LLFQKRQRRVQKFTFELA) is binding to ACTN2, PPP3CA and TCAP. A binding to FLNC region spans residues 67 to 110 (AASQRAMLAGSARRKVTGTAESGTVANANGPEGPNYRSELHIFP). The disordered stretch occupies residues 79–102 (RRKVTGTAESGTVANANGPEGPNY). The tract at residues 186 to 207 (PSPNDYRNFNKTPVPFGGPLVG) is binding to ACTN2.

The protein belongs to the myozenin family. In terms of assembly, interacts with ACTN2, LDB3, FLNC, PPP3CA and TCAP. Expressed specifically in skeletal muscle. Not detected in heart.

The protein localises to the cytoplasm. Its subcellular location is the myofibril. It localises to the sarcomere. It is found in the z line. In terms of biological role, myozenins may serve as intracellular binding proteins involved in linking Z line proteins such as alpha-actinin, gamma-filamin, TCAP/telethonin, LDB3/ZASP and localizing calcineurin signaling to the sarcomere. Plays an important role in the modulation of calcineurin signaling. May play a role in myofibrillogenesis. This is Myozenin-3 from Homo sapiens (Human).